We begin with the raw amino-acid sequence, 525 residues long: MERLNELCDIIEQNPKQFLDKLPWICQQCPQSKLLRAESPRFSQSHLNAILAVTRILSKIVDTTDENAKFVVLDFLQTVPKSFHRSFWPYSLSLESISAFYCSFLGYVSCLSQLMVEGYLLRAAQRSDIFAHTLIWHLQGESVEEIVKDGAFDKNASFQEILSDVRQHIVDGFTPKALNFFSREFDFFEKVTSISGALLPLPKEERVAGIRRELEKIKMQGEDLYLPTAPNKLVRVIQVDSGIPLQSAAKVPIMITFNVVDLDGDHNDVKPQACIFKVGDDCRQDVLALQVISLLGDIFQAVGLNLYLFPYGVLPTVVPNTRSRSQMGETTDGGLYEIFQQNYGLVGSTTFETARANFLISSAGYAVASLLLQPKDRHNGNLLFDDVGRLVHIDFGFILETSPGGNMRFENAHFKLSHEMTQLLDPSGVMKSKTWHQFVSLCVKGYLAARRYMDEIISTVQMMLESGLPCFSRGDPIGNLRKRFHPEMSEREAALFMINVCTDAYNKWTTAGYDLIQYLQQGVEK.

The tract at residues 163-278 (SDVRQHIVDG…VKPQACIFKV (116 aa)) is pleckstrin homology (PH) domain conferring phosphoinositide binding specificity. Residues 239–509 (VDSGIPLQSA…VCTDAYNKWT (271 aa)) form the PI3K/PI4K catalytic domain. The segment at 245 to 251 (LQSAAKV) is G-loop. The catalytic loop stretch occupies residues 373–381 (QPKDRHNGN). Residues 392–417 (HIDFGFILETSPGGNMRFENAHFKLS) form an activation loop region.

This sequence belongs to the PI3/PI4-kinase family. Type III PI4K subfamily.

Its subcellular location is the membrane. The enzyme catalyses a 1,2-diacyl-sn-glycero-3-phospho-(1D-myo-inositol) + ATP = a 1,2-diacyl-sn-glycero-3-phospho-(1D-myo-inositol 4-phosphate) + ADP + H(+). Acts on phosphatidylinositol (PtdIns) in the first committed step in the production of the second messenger inositol-1,4,5,-trisphosphate. This Arabidopsis thaliana (Mouse-ear cress) protein is Phosphatidylinositol 4-kinase alpha 2 (PI4KA2).